A 320-amino-acid polypeptide reads, in one-letter code: GTP 3',8-cyclase (320 aa).

The Radical SAM core domain maps to 5 to 222; the sequence is KLSRPLKVLR…LMKKEFTFYP (218 aa). Arginine 14 lines the GTP pocket. 3 residues coordinate [4Fe-4S] cluster: cysteine 21, cysteine 25, and cysteine 28. Arginine 65 contributes to the GTP binding site. Residue glycine 69 participates in S-adenosyl-L-methionine binding. Residue threonine 96 participates in GTP binding. Position 120 (serine 120) interacts with S-adenosyl-L-methionine. Residue lysine 157 coordinates GTP. Residue methionine 191 coordinates S-adenosyl-L-methionine. Residues cysteine 253 and cysteine 256 each coordinate [4Fe-4S] cluster. 258–260 provides a ligand contact to GTP; that stretch reads RIR. Cysteine 270 is a [4Fe-4S] cluster binding site.

Belongs to the radical SAM superfamily. MoaA family. In terms of assembly, monomer and homodimer. [4Fe-4S] cluster serves as cofactor.

The catalysed reaction is GTP + AH2 + S-adenosyl-L-methionine = (8S)-3',8-cyclo-7,8-dihydroguanosine 5'-triphosphate + 5'-deoxyadenosine + L-methionine + A + H(+). It functions in the pathway cofactor biosynthesis; molybdopterin biosynthesis. Functionally, catalyzes the cyclization of GTP to (8S)-3',8-cyclo-7,8-dihydroguanosine 5'-triphosphate. The polypeptide is GTP 3',8-cyclase (Aquifex aeolicus (strain VF5)).